The primary structure comprises 239 residues: Putative antitoxin VapB45 (239 aa).

In terms of biological role, possibly the antitoxin component of a type II toxin-antitoxin (TA) system. Its cognate toxin is VapC45. In Mycobacterium tuberculosis (strain ATCC 25618 / H37Rv), this protein is Putative antitoxin VapB45.